Consider the following 266-residue polypeptide: Nickel import ATP-binding protein NikE (266 aa).

In terms of domain architecture, ABC transporter spans 4 to 252 (ISADNIVKIY…RHPASRLLRE (249 aa)). 45–52 (GRSGCGKS) contributes to the ATP binding site.

This sequence belongs to the ABC transporter superfamily. Nickel importer (TC 3.A.1.5.3) family. The complex is composed of two ATP-binding proteins (NikD and NikE), two transmembrane proteins (NikB and NikC) and a solute-binding protein (NikA).

It localises to the cell inner membrane. The catalysed reaction is Ni(2+)(out) + ATP + H2O = Ni(2+)(in) + ADP + phosphate + H(+). In terms of biological role, part of the ABC transporter complex NikABCDE involved in nickel import. Responsible for energy coupling to the transport system. This Brucella abortus (strain 2308) protein is Nickel import ATP-binding protein NikE.